Here is a 395-residue protein sequence, read N- to C-terminus: Cytoplasmic tRNA 2-thiolation protein 1 (395 aa).

Over residues 297-309 (TVAYKNKNKNKKK) the composition is skewed to basic residues. Positions 297–335 (TVAYKNKNKNKKKSNSEQEEQEKQEQEVNPDGSISLNRN) are disordered.

Belongs to the TtcA family. CTU1/NCS6/ATPBD3 subfamily.

The protein localises to the cytoplasm. It participates in tRNA modification; 5-methoxycarbonylmethyl-2-thiouridine-tRNA biosynthesis. In terms of biological role, plays a central role in 2-thiolation of mcm(5)S(2)U at tRNA wobble positions of tRNA(Lys), tRNA(Glu) and tRNA(Gln). Directly binds tRNAs and probably acts by catalyzing adenylation of tRNAs, an intermediate required for 2-thiolation. It is unclear whether it acts as a sulfurtransferase that transfers sulfur from thiocarboxylated URM1 onto the uridine of tRNAs at wobble position. Prior mcm(5) tRNA modification by the elongator complex is required for 2-thiolation. May also be involved in protein urmylation. This Candida albicans (strain SC5314 / ATCC MYA-2876) (Yeast) protein is Cytoplasmic tRNA 2-thiolation protein 1.